Consider the following 164-residue polypeptide: Rhomboid-related protein 1 (164 aa).

4 helical membrane-spanning segments follow: residues 10–30, 32–52, 56–76, and 120–140; these read GFNA…HGVL, ISLL…ITDM, VVGG…NVVM, and PSFM…LTIL. The active-site Nucleophile is S60. H125 is an active-site residue.

Belongs to the peptidase S54 family.

The protein resides in the membrane. It catalyses the reaction Cleaves type-1 transmembrane domains using a catalytic dyad composed of serine and histidine that are contributed by different transmembrane domains.. May be involved in regulated intramembrane proteolysis and the subsequent release of functional polypeptides from their membrane anchors. The protein is Rhomboid-related protein 1 (Rhbdl1) of Rattus norvegicus (Rat).